Here is a 376-residue protein sequence, read N- to C-terminus: 1-acyl-sn-glycerol-3-phosphate acyltransferase gamma (376 aa).

Over M1 to K124 the chain is Cytoplasmic. The short motif at H96–D101 is the HXXXXD motif element. A helical membrane pass occupies residues E125–K145. The Lumenal segment spans residues R146–T316. A helical transmembrane segment spans residues I317 to L339. Topologically, residues T340–E376 are cytoplasmic.

Belongs to the 1-acyl-sn-glycerol-3-phosphate acyltransferase family.

Its subcellular location is the endoplasmic reticulum membrane. It localises to the nucleus envelope. The enzyme catalyses a 1-acyl-sn-glycero-3-phosphate + an acyl-CoA = a 1,2-diacyl-sn-glycero-3-phosphate + CoA. It catalyses the reaction pentadecanoyl-CoA + 1-(9Z-octadecenoyl)-sn-glycero-3-phosphate = 1-(9Z)-octadecenoyl-2-pentadecanoyl-sn-glycero-3-phosphate + CoA. It carries out the reaction heptadecanoyl-CoA + 1-(9Z-octadecenoyl)-sn-glycero-3-phosphate = 1-(9Z)-octadecenoyl-2-heptadecanoyl-sn-glycero-3-phosphate + CoA. The catalysed reaction is 1-(9Z-octadecenoyl)-sn-glycero-3-phosphate + octadecanoyl-CoA = 1-(9Z-octadecenoyl)-2-octadecanoyl-sn-glycero-3-phosphate + CoA. The enzyme catalyses nonadecanoyl-CoA + 1-(9Z-octadecenoyl)-sn-glycero-3-phosphate = 1-(9Z)-octadecenoyl-2-nonadecanoyl-sn-glycero-3-phosphate + CoA. It catalyses the reaction 1-(9Z-octadecenoyl)-sn-glycero-3-phosphate + (5Z,8Z,11Z,14Z)-eicosatetraenoyl-CoA = 1-(9Z)-octadecenoyl-2-(5Z,8Z,11Z,14Z)-eicosatetraenoyl-sn-glycero-3-phosphate + CoA. It carries out the reaction 1-(9Z-octadecenoyl)-sn-glycero-3-phosphate + (9Z)-octadecenoyl-CoA = 1,2-di-(9Z-octadecenoyl)-sn-glycero-3-phosphate + CoA. The catalysed reaction is 1-(9Z-octadecenoyl)-sn-glycero-3-phosphate + (9Z,12Z)-octadecadienoyl-CoA = 1-(9Z)-octadecenoyl-2-(9Z,12Z)-octadecadienoyl-sn-glycero-3-phosphate + CoA. The enzyme catalyses 1-(9Z-octadecenoyl)-sn-glycero-3-phosphocholine + (5Z,8Z,11Z,14Z)-eicosatetraenoyl-CoA = 1-(9Z)-octadecenoyl-2-(5Z,8Z,11Z,14Z)-icosatetraenoyl-sn-glycero-3-phosphocholine + CoA. It catalyses the reaction 1-(9Z-octadecenoyl)-sn-glycero-3-phospho-(1D-myo-inositol) + (5Z,8Z,11Z,14Z)-eicosatetraenoyl-CoA = 1-(9Z-octadecenoyl)-2-(5Z,8Z,11Z,14Z-eicosatetraenoyl)-sn-glycero-3-phospho-1D-myo-inositol + CoA. It carries out the reaction 1-(9Z-octadecenoyl)-sn-glycero-3-phospho-L-serine + (5Z,8Z,11Z,14Z)-eicosatetraenoyl-CoA = 1-(9Z-octadecenoyl)-2-(5Z,8Z,11Z,14Z-eicosatetraenoyl)-sn-glycero-3-phospho-L-serine + CoA. The catalysed reaction is 1-hexadecanoyl-sn-glycero-3-phosphate + (9Z)-octadecenoyl-CoA = 1-hexadecanoyl-2-(9Z-octadecenoyl)-sn-glycero-3-phosphate + CoA. The enzyme catalyses 1-hexadecanoyl-sn-glycero-3-phosphate + (5Z,8Z,11Z,14Z)-eicosatetraenoyl-CoA = 1-hexadecanoyl-2-(5Z,8Z,11Z,14Z-eicosatetraenoyl)-sn-glycero-3-phosphate + CoA. It catalyses the reaction 1-heptadecanoyl-sn-glycero-3-phosphate + (5Z,8Z,11Z,14Z)-eicosatetraenoyl-CoA = 1-heptadecanoyl-2-(5Z,8Z,11Z,14Z)-eicosatetraenoyl-sn-glycero-3-phosphate + CoA. It carries out the reaction 1-octadecanoyl-sn-glycero-3-phosphate + (9Z)-octadecenoyl-CoA = 1-octadecanoyl-2-(9Z-octadecenoyl)-sn-glycero-3-phosphate + CoA. The catalysed reaction is 1-octadecanoyl-sn-glycero-3-phosphate + (5Z,8Z,11Z,14Z)-eicosatetraenoyl-CoA = 1-octadecanoyl-2-(5Z,8Z,11Z,14Z-eicosatetraenoyl)-sn-glycero-3-phosphate + CoA. The enzyme catalyses 1-(9Z-octadecenoyl)-sn-glycero-3-phosphate + hexadecanoyl-CoA = 1-hexadecanoyl-2-(9Z-octadecenoyl)-sn-glycero-3-phosphate + CoA. It catalyses the reaction 1-O-(9Z-octadecenyl)-sn-glycero-3-phosphate + (5Z,8Z,11Z,14Z)-eicosatetraenoyl-CoA = 1-O-(9Z-octadecenyl)-2-(5Z,8Z,11Z,14Z-eicosatetraenoyl)-sn-glycero-3-phosphate + CoA. It carries out the reaction a 1-acyl-sn-glycero-3-phospho-(1D-myo-inositol) + (5Z,8Z,11Z,14Z)-eicosatetraenoyl-CoA = a 1-acyl-2-(5Z,8Z,11Z,14Z-eicosatetraenoyl)-sn-glycero-3-phospho-(1D-myo-inositol) + CoA. It participates in phospholipid metabolism; CDP-diacylglycerol biosynthesis; CDP-diacylglycerol from sn-glycerol 3-phosphate: step 2/3. Its function is as follows. Converts 1-acyl-sn-glycerol-3-phosphate (lysophosphatidic acid or LPA) into 1,2-diacyl-sn-glycerol-3-phosphate (phosphatidic acid or PA) by incorporating an acyl moiety at the sn-2 position of the glycerol backbone. Acts on LPA containing saturated or unsaturated fatty acids C16:0-C20:4 at the sn-1 position using C18:1, C20:4 or C18:2-CoA as the acyl donor. Also acts on lysophosphatidylcholine, lysophosphatidylinositol and lysophosphatidylserine using C18:1 or C20:4-CoA. Has a preference for arachidonoyl-CoA as a donor. Also has a modest lysophosphatidylinositol acyltransferase (LPIAT) activity, converts lysophosphatidylinositol (LPI) into phosphatidylinositol. The sequence is that of 1-acyl-sn-glycerol-3-phosphate acyltransferase gamma (AGPAT3) from Pongo abelii (Sumatran orangutan).